The following is a 317-amino-acid chain: Tenomodulin (317 aa).

The Cytoplasmic segment spans residues Met1–Lys30. Residues Ile31–Ser50 traverse the membrane as a helical; Signal-anchor for type II membrane protein segment. Residues Lys51–Val317 lie on the Extracellular side of the membrane. Residues Gly93–Ile186 form the BRICHOS domain. An N-linked (GlcNAc...) asparagine glycan is attached at Asn94. A disulfide bond links Cys120 and Cys178. N-linked (GlcNAc...) asparagine glycosylation is present at Asn180. Ser239 is modified (phosphoserine).

It belongs to the chondromodulin-1 family. In terms of tissue distribution, highly expressed in hypovascular connective tissues such as tendons. Also has strong expression in adipose tissue.

The protein resides in the membrane. It localises to the nucleus envelope. It is found in the cytoplasm. May be an angiogenesis inhibitor. The protein is Tenomodulin (TNMD) of Homo sapiens (Human).